The sequence spans 122 residues: Protein translocase subunit SecE (122 aa).

A run of 3 helical transmembrane segments spans residues 14 to 34, 38 to 58, and 93 to 113; these read LLKWLLVAVLVVVAVVGNQYF, PILYRVLGILVLAVIAAFLAL, and LIVVAVVLVMALLLWGLDSLL.

This sequence belongs to the SecE/SEC61-gamma family. As to quaternary structure, component of the Sec protein translocase complex. Heterotrimer consisting of SecY, SecE and SecG subunits. The heterotrimers can form oligomers, although 1 heterotrimer is thought to be able to translocate proteins. Interacts with the ribosome. Interacts with SecDF, and other proteins may be involved. Interacts with SecA.

It localises to the cell inner membrane. Its function is as follows. Essential subunit of the Sec protein translocation channel SecYEG. Clamps together the 2 halves of SecY. May contact the channel plug during translocation. This Pseudomonas aeruginosa (strain ATCC 15692 / DSM 22644 / CIP 104116 / JCM 14847 / LMG 12228 / 1C / PRS 101 / PAO1) protein is Protein translocase subunit SecE.